The following is a 236-amino-acid chain: 2-C-methyl-D-erythritol 4-phosphate cytidylyltransferase (236 aa).

This sequence belongs to the IspD/TarI cytidylyltransferase family. IspD subfamily. In terms of assembly, homodimer.

It carries out the reaction 2-C-methyl-D-erythritol 4-phosphate + CTP + H(+) = 4-CDP-2-C-methyl-D-erythritol + diphosphate. It participates in isoprenoid biosynthesis; isopentenyl diphosphate biosynthesis via DXP pathway; isopentenyl diphosphate from 1-deoxy-D-xylulose 5-phosphate: step 2/6. Functionally, catalyzes the formation of 4-diphosphocytidyl-2-C-methyl-D-erythritol from CTP and 2-C-methyl-D-erythritol 4-phosphate (MEP). This is 2-C-methyl-D-erythritol 4-phosphate cytidylyltransferase from Salmonella agona (strain SL483).